The following is a 196-amino-acid chain: ATP-dependent Clp protease proteolytic subunit (196 aa).

The Nucleophile role is filled by S101. H126 is a catalytic residue.

The protein belongs to the peptidase S14 family. Component of the chloroplastic Clp protease core complex.

Its subcellular location is the plastid. It localises to the chloroplast stroma. The catalysed reaction is Hydrolysis of proteins to small peptides in the presence of ATP and magnesium. alpha-casein is the usual test substrate. In the absence of ATP, only oligopeptides shorter than five residues are hydrolyzed (such as succinyl-Leu-Tyr-|-NHMec, and Leu-Tyr-Leu-|-Tyr-Trp, in which cleavage of the -Tyr-|-Leu- and -Tyr-|-Trp bonds also occurs).. Its function is as follows. Cleaves peptides in various proteins in a process that requires ATP hydrolysis. Has a chymotrypsin-like activity. Plays a major role in the degradation of misfolded proteins. In Eucalyptus globulus subsp. globulus (Tasmanian blue gum), this protein is ATP-dependent Clp protease proteolytic subunit.